Consider the following 280-residue polypeptide: Aspartate/glutamate leucyltransferase (280 aa).

Belongs to the R-transferase family. Bpt subfamily.

The protein resides in the cytoplasm. It carries out the reaction N-terminal L-glutamyl-[protein] + L-leucyl-tRNA(Leu) = N-terminal L-leucyl-L-glutamyl-[protein] + tRNA(Leu) + H(+). It catalyses the reaction N-terminal L-aspartyl-[protein] + L-leucyl-tRNA(Leu) = N-terminal L-leucyl-L-aspartyl-[protein] + tRNA(Leu) + H(+). Its function is as follows. Functions in the N-end rule pathway of protein degradation where it conjugates Leu from its aminoacyl-tRNA to the N-termini of proteins containing an N-terminal aspartate or glutamate. This is Aspartate/glutamate leucyltransferase from Cereibacter sphaeroides (strain KD131 / KCTC 12085) (Rhodobacter sphaeroides).